Reading from the N-terminus, the 718-residue chain is Polyribonucleotide nucleotidyltransferase (718 aa).

2 residues coordinate Mg(2+): D506 and D512. Residues 572 to 632 (PKLELFSVDP…EQIKAAKDYI (61 aa)) enclose the KH domain. The region spanning 657–718 (GQEFQGIVKK…NGKISVDLCE (62 aa)) is the S1 motif domain.

It belongs to the polyribonucleotide nucleotidyltransferase family. Mg(2+) is required as a cofactor.

It is found in the cytoplasm. It carries out the reaction RNA(n+1) + phosphate = RNA(n) + a ribonucleoside 5'-diphosphate. In terms of biological role, involved in mRNA degradation. Catalyzes the phosphorolysis of single-stranded polyribonucleotides processively in the 3'- to 5'-direction. This is Polyribonucleotide nucleotidyltransferase from Campylobacter jejuni subsp. doylei (strain ATCC BAA-1458 / RM4099 / 269.97).